We begin with the raw amino-acid sequence, 331 residues long: NADH-quinone oxidoreductase subunit H 2 (331 aa).

The next 8 helical transmembrane spans lie at 6–26 (AGFLVLIAKLTIVLAVLLLVA), 79–99 (IFMLAPAVVAATALLVFAVIP), 120–140 (VGLLYFFALSSLGVYGVALGG), 155–175 (GAAQMISYELSLGLAIVPVVM), 193–213 (PFILTQPVAFAIFVISAMAEI), 242–262 (LFFLGEYVNMQVLGGLVAVLF), 271–291 (LPPVVWLFIKIVLVALIMIWV), and 310–330 (VLIPLALVNIMVTGAWVLWMG).

Belongs to the complex I subunit 1 family. As to quaternary structure, NDH-1 is composed of 14 different subunits. Subunits NuoA, H, J, K, L, M, N constitute the membrane sector of the complex.

Its subcellular location is the cell inner membrane. It catalyses the reaction a quinone + NADH + 5 H(+)(in) = a quinol + NAD(+) + 4 H(+)(out). Functionally, NDH-1 shuttles electrons from NADH, via FMN and iron-sulfur (Fe-S) centers, to quinones in the respiratory chain. The immediate electron acceptor for the enzyme in this species is believed to be ubiquinone. Couples the redox reaction to proton translocation (for every two electrons transferred, four hydrogen ions are translocated across the cytoplasmic membrane), and thus conserves the redox energy in a proton gradient. This subunit may bind ubiquinone. This Syntrophobacter fumaroxidans (strain DSM 10017 / MPOB) protein is NADH-quinone oxidoreductase subunit H 2.